Consider the following 215-residue polypeptide: Phosphoenolpyruvate guanylyltransferase (215 aa).

Residues Thr144, Gly159, and Ser162 each contribute to the phosphoenolpyruvate site.

It belongs to the CofC family.

It catalyses the reaction phosphoenolpyruvate + GTP + H(+) = enolpyruvoyl-2-diphospho-5'-guanosine + diphosphate. The protein operates within cofactor biosynthesis; coenzyme F420 biosynthesis. In terms of biological role, guanylyltransferase that catalyzes the activation of phosphoenolpyruvate (PEP) as enolpyruvoyl-2-diphospho-5'-guanosine, via the condensation of PEP with GTP. It is involved in the biosynthesis of coenzyme F420, a hydride carrier cofactor. The chain is Phosphoenolpyruvate guanylyltransferase from Geodermatophilus obscurus (strain ATCC 25078 / DSM 43160 / JCM 3152 / CCUG 61914 / KCC A-0152 / KCTC 9177 / NBRC 13315 / NRRL B-3577 / G-20).